A 214-amino-acid chain; its full sequence is Thymidylate kinase (214 aa).

7–14 (GIDGAGKS) is an ATP binding site.

This sequence belongs to the thymidylate kinase family.

The enzyme catalyses dTMP + ATP = dTDP + ADP. Phosphorylation of dTMP to form dTDP in both de novo and salvage pathways of dTTP synthesis. This is Thymidylate kinase from Chlorobium luteolum (strain DSM 273 / BCRC 81028 / 2530) (Pelodictyon luteolum).